We begin with the raw amino-acid sequence, 357 residues long: Homeobox protein HMX3 (357 aa).

Disordered regions lie at residues methionine 1 to proline 58 and leucine 129 to lysine 229. A compositionally biased stretch (pro residues) spans proline 16–lysine 27. Composition is skewed to basic and acidic residues over residues proline 130 to leucine 140 and threonine 149 to aspartate 173. 2 positions are modified to phosphoserine: serine 153 and serine 180. The segment covering alanine 191 to alanine 209 has biased composition (low complexity). The segment covering glutamate 210–proline 223 has biased composition (basic and acidic residues). Residues lysine 227–leucine 286 constitute a DNA-binding region (homeobox).

It belongs to the HMX homeobox family.

Its subcellular location is the nucleus. Functionally, transcription factor involved in specification of neuronal cell types and which is required for inner ear and hypothalamus development. Binds to the 5'-CAAGTG-3' core sequence. Controls semicircular canal formation in the inner ear. Also required for hypothalamic/pituitary axis of the CNS. The protein is Homeobox protein HMX3 (HMX3) of Homo sapiens (Human).